The following is a 260-amino-acid chain: Tropinone reductase 2 (260 aa).

13–37 (LVTGGSRGIGYGIVEELANLGASVY) is a binding site for NADP(+). A substrate-binding site is contributed by S146. Y159 acts as the Proton acceptor in catalysis.

It belongs to the short-chain dehydrogenases/reductases (SDR) family.

The enzyme catalyses pseudotropine + NADP(+) = tropinone + NADPH + H(+). Its pathway is alkaloid biosynthesis; tropane alkaloid biosynthesis. Catalyzes the stereospecific reduction of tropinone to pseudotropine. This chain is Tropinone reductase 2 (TR2), found in Hyoscyamus niger (Black henbane).